We begin with the raw amino-acid sequence, 129 residues long: uncharacterized protein (129 aa).

Acidic residues predominate over residues 86-96; sequence NDGFSSDDEPE. The interval 86-129 is disordered; it reads NDGFSSDDEPEEHVILTEDNQGEPSETPQATFDITEFIKTEDED. A compositionally biased stretch (polar residues) spans 103 to 117; the sequence is EDNQGEPSETPQATF.

This sequence belongs to the asfivirus D129L family.

This is an uncharacterized protein from African swine fever virus (isolate Tick/South Africa/Pretoriuskop Pr4/1996) (ASFV).